Reading from the N-terminus, the 572-residue chain is Phosphoenolpyruvate-protein phosphotransferase (572 aa).

Catalysis depends on H191, which acts as the Tele-phosphohistidine intermediate. Residues R298 and R334 each coordinate phosphoenolpyruvate. E433 and D457 together coordinate Mg(2+). Phosphoenolpyruvate contacts are provided by residues 456 to 457 (ND) and R467. C504 (proton donor) is an active-site residue.

It belongs to the PEP-utilizing enzyme family. In terms of assembly, homodimer. Requires Mg(2+) as cofactor.

The protein localises to the cytoplasm. It catalyses the reaction L-histidyl-[protein] + phosphoenolpyruvate = N(pros)-phospho-L-histidyl-[protein] + pyruvate. Functionally, general (non sugar-specific) component of the phosphoenolpyruvate-dependent sugar phosphotransferase system (sugar PTS). This major carbohydrate active-transport system catalyzes the phosphorylation of incoming sugar substrates concomitantly with their translocation across the cell membrane. Enzyme I transfers the phosphoryl group from phosphoenolpyruvate (PEP) to the phosphoryl carrier protein (HPr). The protein is Phosphoenolpyruvate-protein phosphotransferase (ptsI) of Staphylococcus aureus (strain MRSA252).